The following is a 406-amino-acid chain: Elongation factor Tu (406 aa).

One can recognise a tr-type G domain in the interval 10-215 (KPHVNVGTIG…AIDEYIPTPV (206 aa)). The segment at 19–26 (GHVDHGKT) is G1. 19 to 26 (GHVDHGKT) is a binding site for GTP. Position 26 (Thr-26) interacts with Mg(2+). The segment at 61 to 65 (GITIN) is G2. The segment at 82–85 (DCPG) is G3. Residues 82–86 (DCPGH) and 137–140 (NKVD) each bind GTP. A G4 region spans residues 137–140 (NKVD). Positions 175–177 (SAL) are G5.

It belongs to the TRAFAC class translation factor GTPase superfamily. Classic translation factor GTPase family. EF-Tu/EF-1A subfamily. As to quaternary structure, monomer.

It localises to the cytoplasm. The enzyme catalyses GTP + H2O = GDP + phosphate + H(+). In terms of biological role, GTP hydrolase that promotes the GTP-dependent binding of aminoacyl-tRNA to the A-site of ribosomes during protein biosynthesis. The protein is Elongation factor Tu of Thermus thermophilus (strain ATCC BAA-163 / DSM 7039 / HB27).